Here is a 695-residue protein sequence, read N- to C-terminus: Tail-specific protease (695 aa).

An N-terminal signal peptide occupies residues 1–29 (MVMKFKMSKNVICYTWLSVCLSSAIPAFA). In terms of domain architecture, PDZ spans 256-316 (IGTTLQSEDD…RLEDLVEKIK (61 aa)). Catalysis depends on charge relay system residues Ser459, Asp470, and Lys484.

Belongs to the peptidase S41A family.

Its subcellular location is the cell inner membrane. It catalyses the reaction The enzyme shows specific recognition of a C-terminal tripeptide, Xaa-Yaa-Zaa, in which Xaa is preferably Ala or Leu, Yaa is preferably Ala or Tyr, and Zaa is preferably Ala, but then cleaves at a variable distance from the C-terminus. A typical cleavage is -Ala-Ala-|-Arg-Ala-Ala-Lys-Glu-Asn-Tyr-Ala-Leu-Ala-Ala.. Its function is as follows. Involved in the cleavage of a C-terminal peptide of 11 residues from the precursor form of penicillin-binding protein 3 (PBP3). May be involved in protection of the bacterium from thermal and osmotic stresses. This chain is Tail-specific protease (prc), found in Haemophilus influenzae (strain ATCC 51907 / DSM 11121 / KW20 / Rd).